The sequence spans 283 residues: Shikimate dehydrogenase (NADP(+)) (283 aa).

Shikimate is bound by residues 16-18 (SLS) and T63. K67 functions as the Proton acceptor in the catalytic mechanism. Residue D79 coordinates NADP(+). Shikimate-binding residues include N88 and D103. NADP(+)-binding positions include 128 to 132 (GAGGA) and G243.

It belongs to the shikimate dehydrogenase family. Homodimer.

It catalyses the reaction shikimate + NADP(+) = 3-dehydroshikimate + NADPH + H(+). Its pathway is metabolic intermediate biosynthesis; chorismate biosynthesis; chorismate from D-erythrose 4-phosphate and phosphoenolpyruvate: step 4/7. Its function is as follows. Involved in the biosynthesis of the chorismate, which leads to the biosynthesis of aromatic amino acids. Catalyzes the reversible NADPH linked reduction of 3-dehydroshikimate (DHSA) to yield shikimate (SA). This Xanthomonas euvesicatoria pv. vesicatoria (strain 85-10) (Xanthomonas campestris pv. vesicatoria) protein is Shikimate dehydrogenase (NADP(+)).